A 193-amino-acid polypeptide reads, in one-letter code: Heat shock protein beta-1 (193 aa).

2 positions are modified to phosphoserine: S15 and S80. The sHSP domain maps to 74-182; it reads RALSELSSGI…QSSEITIPVT (109 aa).

This sequence belongs to the small heat shock protein (HSP20) family. Homooligomer. Homodimer; becomes monomeric upon activation. Heterooligomer. Smooth, cardiac and skeletal muscle, hardly detectable in fibroblasts or focal contacts.

Its subcellular location is the cytoplasm. It is found in the nucleus. The protein localises to the cytoskeleton. The protein resides in the spindle. In terms of biological role, small heat shock protein which functions as a molecular chaperone probably maintaining denatured proteins in a folding-competent state. Plays a role in stress resistance and actin organization. The polypeptide is Heat shock protein beta-1 (HSPB1) (Gallus gallus (Chicken)).